We begin with the raw amino-acid sequence, 2898 residues long: Papilin (2898 aa).

An N-terminal signal peptide occupies residues 1–26; that stretch reads MDLSRRLCSTALVAFIVLASIHDSQS. The segment at 43-67 is disordered; the sequence is LPESSVTPGGEGNDPDEWTPWSSPS. The TSP type-1 1 domain maps to 57 to 111; the sequence is PDEWTPWSSPSDCSRTCGGGVSYQTRECLRRDDRGEAVCSGGSRRYFSCNTQDCP. 3 disulfide bridges follow: Cys-69/Cys-105, Cys-73/Cys-110, and Cys-84/Cys-95. Residues Asn-258 and Asn-319 are each glycosylated (N-linked (GlcNAc...) asparagine). In terms of domain architecture, TSP type-1 2 spans 338-397; sequence DTHTWTHHQFNACSASCGGGSQSRKVTCNNRITLAEVNPSLCDQKSKPVEEQACGTEPCA. N-linked (GlcNAc...) asparagine glycosylation is present at Asn-419. 4 consecutive TSP type-1 domains span residues 461-521, 522-575, 576-633, and 639-694; these read NCPK…TPCE, GVDW…KSPK, CEAQ…QDCE, and CPGE…EACT. 3 disulfide bridges follow: Cys-462-Cys-504, Cys-473-Cys-515, and Cys-477-Cys-520. The N-linked (GlcNAc...) asparagine glycan is linked to Asn-669. Disordered stretches follow at residues 699–1252 and 1323–1367; these read LPLT…CAKS and GEND…PDTK. Acidic residues-rich tracts occupy residues 708 to 720 and 727 to 738; these read IEDD…EDGI and LSDDEKSEDVID. A compositionally biased stretch (polar residues) spans 768-788; that stretch reads STGTTFEGSGYDSESTTDSGI. The span at 801 to 879 shows a compositional bias: low complexity; sequence EASTDLSSST…ASASESTDVS (79 aa). N-linked (GlcNAc...) asparagine glycans are attached at residues Asn-889, Asn-914, Asn-917, Asn-950, and Asn-1064. The segment covering 890–1053 has biased composition (low complexity); it reads ASDSTPESST…SDNTDITTDG (164 aa). Over residues 1064 to 1073 the composition is skewed to polar residues; the sequence is NASTEGSTEG. Low complexity-rich tracts occupy residues 1076 to 1091 and 1104 to 1215; these read EDTT…TEST and STVE…IWST. The span at 1237–1248 shows a compositional bias: basic residues; the sequence is SKPRKCKPKKST. Over residues 1330 to 1351 the composition is skewed to low complexity; the sequence is PETTTVPPTTTTEETQPETTTE. 2 N-linked (GlcNAc...) asparagine glycosylation sites follow: Asn-1489 and Asn-1623. Disulfide bonds link Cys-1612–Cys-1662, Cys-1621–Cys-1645, Cys-1637–Cys-1658, Cys-1671–Cys-1721, Cys-1680–Cys-1704, Cys-1696–Cys-1717, Cys-1730–Cys-1780, Cys-1739–Cys-1763, Cys-1755–Cys-1776, Cys-1790–Cys-1840, Cys-1799–Cys-1823, Cys-1815–Cys-1836, Cys-1849–Cys-1899, Cys-1858–Cys-1882, and Cys-1874–Cys-1895. 5 consecutive BPTI/Kunitz inhibitor domains span residues 1612–1662, 1671–1721, 1730–1780, 1790–1840, and 1849–1899; these read CGLP…KDTC, CLLP…QGTC, CEQP…NYNC, CALP…EDHC, and CEIP…LARC. An N-linked (GlcNAc...) asparagine glycan is attached at Asn-1750. The disordered stretch occupies residues 1902–1928; sequence KPEPTTTTPATRPQPSRQDVCDEEPAP. The segment covering 1905–1916 has biased composition (low complexity); sequence PTTTTPATRPQP. Intrachain disulfides connect Cys-1922-Cys-1972, Cys-1931-Cys-1955, and Cys-1947-Cys-1968. One can recognise a BPTI/Kunitz inhibitor 6 domain in the interval 1922-1972; that stretch reads CDEEPAPGECSTWVLKWHFDRKIGACRQFYYGNCGGNGNRFETENDCQQRC. The disordered stretch occupies residues 1972–2004; the sequence is CLSQEPPAPTPPRAPAPTRQPDPAPTVAQCSQP. Residues 1977-1995 show a composition bias toward pro residues; sequence PPAPTPPRAPAPTRQPDPA. 18 cysteine pairs are disulfide-bonded: Cys-2001-Cys-2051, Cys-2010-Cys-2034, Cys-2026-Cys-2047, Cys-2071-Cys-2121, Cys-2080-Cys-2104, Cys-2096-Cys-2117, Cys-2128-Cys-2178, Cys-2137-Cys-2161, Cys-2153-Cys-2174, Cys-2194-Cys-2244, Cys-2203-Cys-2227, Cys-2219-Cys-2240, Cys-2253-Cys-2303, Cys-2262-Cys-2286, Cys-2278-Cys-2299, Cys-2318-Cys-2371, Cys-2327-Cys-2354, and Cys-2346-Cys-2367. 6 BPTI/Kunitz inhibitor domains span residues 2001 to 2051, 2071 to 2121, 2128 to 2178, 2194 to 2244, 2253 to 2303, and 2318 to 2371; these read CSQP…SARC, CFLA…QNEC, CALP…LNFC, CAEP…ERQC, CNEP…QTVC, and CLLP…TNQC. Residue Asn-2020 is glycosylated (N-linked (GlcNAc...) asparagine). N-linked (GlcNAc...) asparagine glycosylation occurs at Asn-2083. An N-linked (GlcNAc...) asparagine glycan is attached at Asn-2205. The 47-residue stretch at 2452-2498 folds into the WAP domain; that stretch reads DIYKPGECPALSANASGCARECYTDADCRGDNKCCSDGCGQLCVHPA. Residues Asn-2465, Asn-2552, and Asn-2625 are each glycosylated (N-linked (GlcNAc...) asparagine). Ig-like C2-type domains lie at 2523-2607, 2617-2697, and 2749-2840; these read PKEA…REVA, PAYI…RPVS, and PTVN…ANVS. A disulfide bond links Cys-2543 and Cys-2592. Intrachain disulfides connect Cys-2640-Cys-2687 and Cys-2775-Cys-2824. Asn-2784 and Asn-2838 each carry an N-linked (GlcNAc...) asparagine glycan. Positions 2847–2886 constitute a PLAC domain; sequence VSPECVDNPYFANCKLIVKGRYCSNPYYTQFCCRSCTLAG.

This sequence belongs to the papilin family. Homooligomer; disulfide-linked. N-glycosylated. In terms of processing, sulfated. During embryogenesis it first appears in the extracellular matrix during gastrulation and early mesoderm development at sites where basement membranes do not subsequently form. Later, migrating hemocytes prominently produce it together with other ECM components, in basement membranes that underlie epithelia and envelop muscles and emerging organs. At various life stages, it can be synthesized by other cells, such as those of the fat body, and it also occurs in a few, circumscribed regions of relatively amorphous ECM. Isoform E is specifically expressed in ECM of heart and proventriculus. Isoform C is a major component of transitory ECM deposit in the early embryo. Isoform F is a major component of the basement membrane during embryogenesis.

The protein localises to the secreted. It is found in the extracellular space. It localises to the extracellular matrix. Its subcellular location is the basement membrane. Essential extracellular matrix (ECM) protein that influences cell rearrangements. May act by modulating metalloproteinases action during organogenesis. Able to non-competitively inhibit procollagen N-proteinase, an ADAMTS metalloproteinase. The polypeptide is Papilin (Ppn) (Drosophila melanogaster (Fruit fly)).